The primary structure comprises 164 residues: Putative pre-16S rRNA nuclease (164 aa).

The protein belongs to the YqgF nuclease family.

It localises to the cytoplasm. Its function is as follows. Could be a nuclease involved in processing of the 5'-end of pre-16S rRNA. The polypeptide is Putative pre-16S rRNA nuclease (Rhizobium johnstonii (strain DSM 114642 / LMG 32736 / 3841) (Rhizobium leguminosarum bv. viciae)).